The primary structure comprises 130 residues: Small ribosomal subunit protein uS8 (130 aa).

This sequence belongs to the universal ribosomal protein uS8 family. Part of the 30S ribosomal subunit. Contacts proteins S5 and S12.

One of the primary rRNA binding proteins, it binds directly to 16S rRNA central domain where it helps coordinate assembly of the platform of the 30S subunit. This chain is Small ribosomal subunit protein uS8, found in Vibrio vulnificus (strain CMCP6).